Consider the following 180-residue polypeptide: Endogenous alpha-amylase/subtilisin inhibitor (180 aa).

2 cysteine pairs are disulfide-bonded: Cys-42–Cys-89 and Cys-143–Cys-147.

This sequence belongs to the protease inhibitor I3 (leguminous Kunitz-type inhibitor) family.

Inhibitor of endogenous alpha-amylase (wheat also produces an exogenous inhibitor which inactivates alpha-amylase from animal and insect origin). This inhibitor can also inhibit subtilisin. The chain is Endogenous alpha-amylase/subtilisin inhibitor from Triticum aestivum (Wheat).